The following is a 709-amino-acid chain: Fatty acid oxidation complex subunit alpha (709 aa).

The interval 1 to 188 (MEKTFNLTRR…KMGLVNDVVP (188 aa)) is enoyl-CoA hydratase. Residues 308 to 709 (RKVKKAVILG…EMAAEKTRFF (402 aa)) form a 3-hydroxyacyl-CoA dehydrogenase region.

It in the N-terminal section; belongs to the enoyl-CoA hydratase/isomerase family. This sequence in the central section; belongs to the 3-hydroxyacyl-CoA dehydrogenase family. In terms of assembly, heterotetramer of two alpha chains (FadJ) and two beta chains (FadI).

It localises to the cytoplasm. It catalyses the reaction a (3S)-3-hydroxyacyl-CoA = a (2E)-enoyl-CoA + H2O. The catalysed reaction is a 4-saturated-(3S)-3-hydroxyacyl-CoA = a (3E)-enoyl-CoA + H2O. It carries out the reaction a (3S)-3-hydroxyacyl-CoA + NAD(+) = a 3-oxoacyl-CoA + NADH + H(+). The enzyme catalyses (3S)-3-hydroxybutanoyl-CoA = (3R)-3-hydroxybutanoyl-CoA. Its pathway is lipid metabolism; fatty acid beta-oxidation. Its function is as follows. Catalyzes the formation of a hydroxyacyl-CoA by addition of water on enoyl-CoA. Also exhibits 3-hydroxyacyl-CoA epimerase and 3-hydroxyacyl-CoA dehydrogenase activities. This Shewanella sp. (strain MR-7) protein is Fatty acid oxidation complex subunit alpha.